We begin with the raw amino-acid sequence, 156 residues long: uncharacterized protein (156 aa).

A run of 3 helical transmembrane segments spans residues 21–41 (GVLF…AISL), 54–74 (TICS…IDFA), and 80–100 (SVLV…WALF).

Its subcellular location is the membrane. This is an uncharacterized protein from Saccharomyces cerevisiae (strain ATCC 204508 / S288c) (Baker's yeast).